We begin with the raw amino-acid sequence, 321 residues long: uncharacterized protein (321 aa).

9 helical membrane-spanning segments follow: residues 10-28, 41-63, 94-111, 116-138, 143-165, 200-222, 237-259, 266-283, and 293-315; these read LWCS…EMSI, IALY…IWIY, NVAM…SMVH, LFYG…VWLL, FLFY…SNGV, NGVI…DIIF, PFII…VILA, YIIK…SIKI, and IMLS…KFFF.

This sequence belongs to the TerC family.

It localises to the cell membrane. This is an uncharacterized protein from Buchnera aphidicola subsp. Baizongia pistaciae (strain Bp).